A 211-amino-acid polypeptide reads, in one-letter code: Uracil phosphoribosyltransferase (211 aa).

5-phospho-alpha-D-ribose 1-diphosphate contacts are provided by residues Arg-78, Arg-103, and 130 to 138; that span reads DPMLATGSS. Uracil contacts are provided by residues Ile-193 and 198–200; that span reads GDA. Asp-199 serves as a coordination point for 5-phospho-alpha-D-ribose 1-diphosphate.

The protein belongs to the UPRTase family. Requires Mg(2+) as cofactor.

The enzyme catalyses UMP + diphosphate = 5-phospho-alpha-D-ribose 1-diphosphate + uracil. It participates in pyrimidine metabolism; UMP biosynthesis via salvage pathway; UMP from uracil: step 1/1. Allosterically activated by GTP. Functionally, catalyzes the conversion of uracil and 5-phospho-alpha-D-ribose 1-diphosphate (PRPP) to UMP and diphosphate. The chain is Uracil phosphoribosyltransferase from Acinetobacter baylyi (strain ATCC 33305 / BD413 / ADP1).